Here is a 469-residue protein sequence, read N- to C-terminus: Spermatogenesis-associated protein 21 (469 aa).

Disordered stretches follow at residues 1 to 76 (MDNR…AGTQ) and 99 to 157 (HRRA…MGAP). The segment covering 49–61 (EVRDIGERREPDR) has biased composition (basic and acidic residues). Over residues 62 to 73 (AQQQPQKPAVAA) the composition is skewed to low complexity. The segment covering 105 to 132 (ARSQTAQKSPRTLTPVPTSAPSLPQTPA) has biased composition (polar residues). Positions 146–157 (APGPEPAPMGAP) are enriched in pro residues. Residues 198-225 (EPEEQSLQKLYQNREKSEEQLTLKQEEA) are a coiled coil. Residues 255-290 (VTLAQVEDALMSADVNGDGRVDFKDFLAVMTDTRRF) enclose the EF-hand domain. Residues D268, N270, D272, R274, and D279 each coordinate Ca(2+). Residues 424–469 (YALDQCTPPGLDPDIRSPFFQSGSQGNREHNSDSRKWLSSVPARTH) form a disordered region. The span at 450 to 459 (NREHNSDSRK) shows a compositional bias: basic and acidic residues.

Its function is as follows. Involved in the differentiation of haploid spermatids. The protein is Spermatogenesis-associated protein 21 (SPATA21) of Homo sapiens (Human).